Consider the following 622-residue polypeptide: Probable potassium transport system protein Kup (622 aa).

Helical transmembrane passes span 8–28 (LAVLTVGAIGVVYGDIGTSVL), 50–70 (ILSIFFWTLTVIVSLKYVSLV), 101–121 (VLLLVGIFGTSLFYGDGVITP), 137–157 (PTFTKAVIPTTLVILFGLFAM), 165–185 (IGKFFGPITIVWFAVLALLGV), 213–233 (ITFIILGAVVLCVTGAEALYA), 247–267 (WFSVVMPSLVLNYFGQGALLL), 285–305 (ALIPLVVLATLATVIASQALI), 337–357 (IYMPFVNWGLFVTIVLAVVMF), 366–386 (AYGIAVCTDMLITTILTFYVI), 393–413 (PLALCIAATSVFFLVDFAFFA), and 419–439 (LFAGGWFPLVIGGAVFTLMIT).

It belongs to the HAK/KUP transporter (TC 2.A.72) family.

It is found in the cell inner membrane. The catalysed reaction is K(+)(in) + H(+)(in) = K(+)(out) + H(+)(out). Its function is as follows. Transport of potassium into the cell. Likely operates as a K(+):H(+) symporter. The chain is Probable potassium transport system protein Kup from Polaromonas naphthalenivorans (strain CJ2).